A 105-amino-acid chain; its full sequence is Large ribosomal subunit protein bL21 (105 aa).

It belongs to the bacterial ribosomal protein bL21 family. Part of the 50S ribosomal subunit. Contacts protein L20.

In terms of biological role, this protein binds to 23S rRNA in the presence of protein L20. The polypeptide is Large ribosomal subunit protein bL21 (Methylobacterium nodulans (strain LMG 21967 / CNCM I-2342 / ORS 2060)).